The sequence spans 306 residues: Follistatin-related protein 1 (306 aa).

An N-terminal signal peptide occupies residues 1–18 (MWKRWLALALVAVAWVRA). Positions 28 to 51 (ICANVFCGAGRECAVTEKGEPTCL) constitute a Follistatin-like domain. 5 disulfide bridges follow: cysteine 29/cysteine 40, cysteine 34/cysteine 50, cysteine 52/cysteine 82, cysteine 56/cysteine 75, and cysteine 64/cysteine 96. Positions 46 to 98 (GEPTCLCIEQCKPHKRPVCGSNGKTYLNHCELHRDACLTGSKIQVDYDGHCKE) constitute a Kazal-like domain. Residue asparagine 142 is glycosylated (N-linked (GlcNAc...) asparagine). The EF-hand 1 domain occupies 142–176 (NYSEILDKYFKNFDNGDSRLDSSEFLKFVEQNETA). Serine 163 bears the Phosphoserine mark. N-linked (GlcNAc...) asparagine glycosylation is found at asparagine 173 and asparagine 178. The EF-hand 2 domain maps to 191–226 (LRGLCVDALIELSDENADWKLSFQEFLKCLNPSFNP). Residues 231 to 285 (CALEDETYADGAETEVDCNRCVCACGNWVCTAMTCDGKNQKGAQTQTEEEMTRYV) form the VWFC domain.

Homodimer. Interacts with SCN10A. Interacts with DIP2A; DIP2A may act as a cell surface receptor for FSTL1. Interacts with BMP4. Interacts with CD14; this interaction promotes TL4-mediated signaling cascade.

The protein localises to the secreted. Functionally, secreted glycoprotein that is involved in various physiological processes, such as angiogenesis, regulation of the immune response, cell proliferation and differentiation. Plays a role in the development of the central nervous system, skeletal system, lungs, and ureter. Promotes endothelial cell survival, migration and differentiation into network structures in an AKT-dependent manner. Also promotes survival of cardiac myocytes. Initiates various signaling cascades by activating different receptors on the cell surface such as DIP2A, TLR4 or BMP receptors. The protein is Follistatin-related protein 1 (FSTL1) of Pongo abelii (Sumatran orangutan).